Reading from the N-terminus, the 234-residue chain is Sugar fermentation stimulation protein homolog (234 aa).

It belongs to the SfsA family.

The chain is Sugar fermentation stimulation protein homolog from Shewanella sp. (strain MR-4).